We begin with the raw amino-acid sequence, 1938 residues long: Autophagy-related protein 2 homolog A (1938 aa).

Residues 14–111 (ERVCRYLLHH…QLTLQPRRGP (98 aa)) form the Chorein N-terminal domain. 7 positions are modified to phosphoserine: Ser-765, Ser-878, Ser-892, Ser-894, Ser-1266, Ser-1301, and Ser-1309. The disordered stretch occupies residues 1242-1272 (DLHPPPRPPSPTEIAGQKLSESPASLPSCPP). The interval 1315–1359 (LFPGERSGAPPPSPPVGGPAGSLGSCSEEKEDEREEEGDGDTLDS) is disordered. Acidic residues predominate over residues 1343-1359 (EKEDEREEEGDGDTLDS). The segment at 1358 to 1404 (DSDEFCILDAPGLGIPPRDGEPVVTQLHPGPIVVRDGYFSRPIGSTD) is WIPI-interacting. Ser-1402 bears the Phosphoserine mark. Disordered regions lie at residues 1438–1476 (PHPG…GSGR) and 1614–1657 (GETS…PSPP). Over residues 1446–1464 (TGLSGPRSSPSRCSGPNRP) the composition is skewed to low complexity.

It belongs to the ATG2 family. In terms of assembly, interacts with ATG9A (via C-terminus). Interacts (via WIPI-interacting region) with WDR45B/WIPI3. Interacts (via WIPI-interacting region) with WDR45/WIPI4. Interacts with TMEM41B. Interacts with VMP1.

Its subcellular location is the preautophagosomal structure membrane. It localises to the lipid droplet. The protein localises to the endoplasmic reticulum membrane. The catalysed reaction is a 1,2-diacyl-sn-glycero-3-phospho-L-serine(in) = a 1,2-diacyl-sn-glycero-3-phospho-L-serine(out). It catalyses the reaction a 1,2-diacyl-sn-glycero-3-phosphoethanolamine(in) = a 1,2-diacyl-sn-glycero-3-phosphoethanolamine(out). In terms of biological role, lipid transfer protein involved in autophagosome assembly. Tethers the edge of the isolation membrane (IM) to the endoplasmic reticulum (ER) and mediates direct lipid transfer from ER to IM for IM expansion. Binds to the ER exit site (ERES), which is the membrane source for autophagosome formation, and extracts phospholipids from the membrane source and transfers them to ATG9 (ATG9A or ATG9B) to the IM for membrane expansion. Lipid transfer activity is enhanced by WIPI1 and WDR45/WIPI4, which promote ATG2A-association with phosphatidylinositol 3-monophosphate (PI3P)-containing membranes. Also regulates lipid droplets morphology and distribution within the cell. This is Autophagy-related protein 2 homolog A from Homo sapiens (Human).